Reading from the N-terminus, the 464-residue chain is MDYKFPKDFMFGTSTASYQIEGGWNEDGKGENIWDRLVHTSPEVIKDGTNGDIACDSYHKYKEDVAIIKDLNLKFYRFSISWARIAPSGVMNSLEPKGIAYYNNLINELIKNDIIPLVTMYHWDLPQYLQDLGGWVNPIMSDYFKEYARVLFTYFGDRVKWWITFNEPIAVCKGYSIKAYAPNLNLKTTGHYLAGHTQLIAHGKAYRLYEEMFKPTQNGKISISISGVFFMPKNAESDDDIETAERANQFERGWFGHPVYKGDYPPIMKKWVDQKSKEEGLPWSKLPKFTKDEIKLLKGTADFYALNHYSSRLVTFGSDPNPNFNPDASYVTSVDEAWLKPNETPYIIPVPEGLRKLLIWLKNEYGNPQLLITENGYGDDGQLDDFEKISYLKNYLNATLQAMYEDKCNVIGYTVWSLLDNFEWFYGYSIHFGLVKIDFNDPQRTRTKRESYTYFKNVVSTGKP.

Q19 is a binding site for substrate. Zn(2+) is bound by residues H39 and D52. Residues H122 and N166 each contribute to the substrate site. E167 (nucleophile) is an active-site residue. The active-site Proton donor is E374. Residue N397 is glycosylated (N-linked (GlcNAc...) asparagine).

Homodimer. Expressed in the skeletal muscle tissues surrounding the head, abdomen and thorax. Not expressed in flight muscles (at protein level).

The enzyme catalyses a thioglucoside + H2O = a sugar + a thiol.. Its function is as follows. Hydrolyzes glucosinolates to a labile aglycone. This rapidly undergoes spontaneous rearrangement, eliminating sulfur to yield a number of toxic metabolites. Thereby developing a chemical defense system that exploits and mimics the host plant. This chain is Myrosinase 1, found in Brevicoryne brassicae (Mealy cabbage aphid).